The chain runs to 203 residues: Putative GPI-anchored protein YHR214W (203 aa).

Residues 1 to 23 (MFNRFNKFQAAVALALLSRGALG) form the signal peptide. N-linked (GlcNAc...) asparagine glycosylation is found at asparagine 28 and asparagine 138. The GPI-anchor amidated asparagine moiety is linked to residue asparagine 184. A propeptide spans 185 to 203 (AGTFSLSNAILNGGSVSGL) (removed in mature form).

The protein localises to the cell membrane. In Saccharomyces cerevisiae (strain ATCC 204508 / S288c) (Baker's yeast), this protein is Putative GPI-anchored protein YHR214W.